The primary structure comprises 256 residues: L-erythrulose-1-phosphate isomerase (256 aa).

His96 (electrophile) is an active-site residue. Glu169 functions as the Proton acceptor in the catalytic mechanism. Gly175 and Ser212 together coordinate substrate.

Belongs to the triosephosphate isomerase family. As to quaternary structure, homodimer.

It is found in the cytoplasm. The catalysed reaction is L-erythrulose 1-phosphate = D-erythrulose 4-phosphate. It participates in carbohydrate metabolism; erythritol degradation. Catalyzes the isomerization of D-erythrulose-4P to L-erythrulose-1P. Involved in the degradation pathway of erythritol, that allows B.abortus to grow on this compound as the sole carbon source. In Brucella abortus (strain 2308), this protein is L-erythrulose-1-phosphate isomerase.